The chain runs to 181 residues: Translation initiation factor IF-3 (181 aa).

The protein belongs to the IF-3 family. As to quaternary structure, monomer.

Its subcellular location is the cytoplasm. IF-3 binds to the 30S ribosomal subunit and shifts the equilibrium between 70S ribosomes and their 50S and 30S subunits in favor of the free subunits, thus enhancing the availability of 30S subunits on which protein synthesis initiation begins. The sequence is that of Translation initiation factor IF-3 from Pseudoalteromonas translucida (strain TAC 125).